The sequence spans 348 residues: Anthranilate phosphoribosyltransferase (348 aa).

5-phospho-alpha-D-ribose 1-diphosphate-binding positions include Gly-81, 84–85 (GD), 91–94 (NVST), 109–117 (KHGNRAVSG), and Ser-121. An anthranilate-binding site is contributed by Gly-81. Ser-93 contributes to the Mg(2+) binding site. Asn-112 is a binding site for anthranilate. Position 167 (Arg-167) interacts with anthranilate. Mg(2+) is bound by residues Asp-226 and Glu-227.

The protein belongs to the anthranilate phosphoribosyltransferase family. As to quaternary structure, homodimer. Mg(2+) is required as a cofactor.

The enzyme catalyses N-(5-phospho-beta-D-ribosyl)anthranilate + diphosphate = 5-phospho-alpha-D-ribose 1-diphosphate + anthranilate. It functions in the pathway amino-acid biosynthesis; L-tryptophan biosynthesis; L-tryptophan from chorismate: step 2/5. Catalyzes the transfer of the phosphoribosyl group of 5-phosphorylribose-1-pyrophosphate (PRPP) to anthranilate to yield N-(5'-phosphoribosyl)-anthranilate (PRA). The sequence is that of Anthranilate phosphoribosyltransferase from Stutzerimonas stutzeri (strain A1501) (Pseudomonas stutzeri).